The following is a 510-amino-acid chain: MRIGIPRERLTNETRVAATPKTVEQLLKLGFTVAVESGAGQLASFDDKAFVQAGAEIVEGNSVWQSEIILKVNAPLDDEIALLNPGTTLVSFIWPAQNPELMQKLAERNVTVMAMDSVPRISRAQSLDALSSMANIAGYRAIVEAAHEFGRFFTGQITAAGKVPPAKVMVIGAGVAGLAAIGAANSLGAIVRAFDTRPEVKEQVQSMGAEFLELDFKEEAGSGDGYAKVMSDAFIKAEMELFAAQAKEVDIIVTTALIPGKPAPKLITREMVDSMKAGSVIVDLAAQNGGNCEYTVPGEIFTTENGVKVIGYTDLPGRLPTQSSQLYGTNLVNLLKLLCKEKDGNITVDFDDVVIRGVTVIRAGEITWPAPPIQVSAQPQAAQKAAPEVKTEEKCTCSPWRKYALMALAIILFGWMASVAPKEFLGHFTVFALACVVGYYVVWNVSHALHTPLMSVTNAISGIIVVGALLQIGQGGWVSFLSFIAVLIASINIFGGFTVTQRMLKMFRKN.

The Cytoplasmic portion of the chain corresponds to 1–401; it reads MRIGIPRERL…EEKCTCSPWR (401 aa). Residues 120–122, Val175, 195–197, Glu238, and Leu257 each bind NAD(+); these read RIS and DTR. 2 helical membrane-spanning segments follow: residues 402-422 and 423-443; these read KYAL…VAPK and EFLG…YVVW. Topologically, residues 444-452 are cytoplasmic; it reads NVSHALHTP. The chain crosses the membrane as a helical span at residues 453 to 473; sequence LMSVTNAISGIIVVGALLQIG. The Periplasmic portion of the chain corresponds to 474–476; it reads QGG. A helical transmembrane segment spans residues 477–497; sequence WVSFLSFIAVLIASINIFGGF. Residues 498 to 510 lie on the Cytoplasmic side of the membrane; the sequence is TVTQRMLKMFRKN.

This sequence belongs to the AlaDH/PNT family. As to quaternary structure, heterodimer of an alpha (PntA) and a beta (PntB) chain. Alpha subunit serves as the dimerization unit.

It localises to the cell inner membrane. The catalysed reaction is NAD(+) + NADPH + H(+)(in) = NADH + NADP(+) + H(+)(out). In terms of biological role, the transhydrogenation between NADH and NADP is coupled to respiration and ATP hydrolysis and functions as a proton pump across the membrane. The chain is NAD(P) transhydrogenase subunit alpha (pntA) from Escherichia coli (strain K12).